We begin with the raw amino-acid sequence, 130 residues long: Small ribosomal subunit protein uS11 (130 aa).

Belongs to the universal ribosomal protein uS11 family. In terms of assembly, part of the 30S ribosomal subunit. Interacts with proteins S7 and S18. Binds to IF-3.

Its function is as follows. Located on the platform of the 30S subunit, it bridges several disparate RNA helices of the 16S rRNA. Forms part of the Shine-Dalgarno cleft in the 70S ribosome. The chain is Small ribosomal subunit protein uS11 from Gluconobacter oxydans (strain 621H) (Gluconobacter suboxydans).